Consider the following 451-residue polypeptide: UDP-N-acetyl-alpha-D-muramoyl-L-alanyl-L-glutamate epimerase (451 aa).

It belongs to the MurL family.

It carries out the reaction UDP-N-acetyl-alpha-D-muramoyl-L-alanyl-L-glutamate + ATP + H2O = UDP-N-acetyl-alpha-D-muramoyl-L-alanyl-D-glutamate + AMP + diphosphate + H(+). The protein operates within cell wall biogenesis; peptidoglycan biosynthesis. Cell wall formation. Catalyzes epimerization of the terminal L-glutamate in UDP-N-acetyl-alpha-D-muramoyl-L-alanyl-L-glutamate. This chain is UDP-N-acetyl-alpha-D-muramoyl-L-alanyl-L-glutamate epimerase, found in Xanthomonas oryzae pv. oryzae (strain MAFF 311018).